A 234-amino-acid polypeptide reads, in one-letter code: Ubiquinone biosynthesis O-methyltransferase (234 aa).

Residues Arg40, Gly59, Asp80, and Met123 each coordinate S-adenosyl-L-methionine.

The protein belongs to the methyltransferase superfamily. UbiG/COQ3 family.

The enzyme catalyses a 3-demethylubiquinol + S-adenosyl-L-methionine = a ubiquinol + S-adenosyl-L-homocysteine + H(+). It carries out the reaction a 3-(all-trans-polyprenyl)benzene-1,2-diol + S-adenosyl-L-methionine = a 2-methoxy-6-(all-trans-polyprenyl)phenol + S-adenosyl-L-homocysteine + H(+). Its pathway is cofactor biosynthesis; ubiquinone biosynthesis. O-methyltransferase that catalyzes the 2 O-methylation steps in the ubiquinone biosynthetic pathway. The sequence is that of Ubiquinone biosynthesis O-methyltransferase from Coxiella burnetii (strain Dugway 5J108-111).